An 824-amino-acid polypeptide reads, in one-letter code: Leucine--tRNA ligase (824 aa).

A 'HIGH' region motif is present at residues 40-50 (PYPSGKIHMGH). The 'KMSKS' region signature appears at 580–584 (KMSKS). Lys-583 is an ATP binding site.

The protein belongs to the class-I aminoacyl-tRNA synthetase family.

It is found in the cytoplasm. The catalysed reaction is tRNA(Leu) + L-leucine + ATP = L-leucyl-tRNA(Leu) + AMP + diphosphate. The sequence is that of Leucine--tRNA ligase from Alkaliphilus metalliredigens (strain QYMF).